The sequence spans 101 residues: Small ribosomal subunit protein uS14 (101 aa).

Belongs to the universal ribosomal protein uS14 family. In terms of assembly, part of the 30S ribosomal subunit. Contacts proteins S3 and S10.

Functionally, binds 16S rRNA, required for the assembly of 30S particles and may also be responsible for determining the conformation of the 16S rRNA at the A site. This Hahella chejuensis (strain KCTC 2396) protein is Small ribosomal subunit protein uS14.